Here is a 481-residue protein sequence, read N- to C-terminus: NADH-quinone oxidoreductase subunit N (481 aa).

14 helical membrane passes run 11–31, 38–58, 69–89, 107–127, 128–148, 162–182, 203–223, 237–257, 271–291, 299–319, 327–347, 370–390, 401–421, and 457–477; these read AIPE…DLFW, LAAV…VFEM, FVLD…VLMV, VFVL…GGSL, LSVY…VAFY, FVLG…LYGL, LVLV…LGAA, PTVV…ALII, WQQI…VIAI, MLAY…VAGT, FFYT…ILLV, YAFL…TVGF, VAAG…IGAF, and LALL…FYAM.

This sequence belongs to the complex I subunit 2 family. In terms of assembly, NDH-1 is composed of 14 different subunits. Subunits NuoA, H, J, K, L, M, N constitute the membrane sector of the complex.

It localises to the cell inner membrane. It catalyses the reaction a quinone + NADH + 5 H(+)(in) = a quinol + NAD(+) + 4 H(+)(out). Functionally, NDH-1 shuttles electrons from NADH, via FMN and iron-sulfur (Fe-S) centers, to quinones in the respiratory chain. The immediate electron acceptor for the enzyme in this species is believed to be ubiquinone. Couples the redox reaction to proton translocation (for every two electrons transferred, four hydrogen ions are translocated across the cytoplasmic membrane), and thus conserves the redox energy in a proton gradient. The sequence is that of NADH-quinone oxidoreductase subunit N from Acidithiobacillus ferrooxidans (strain ATCC 23270 / DSM 14882 / CIP 104768 / NCIMB 8455) (Ferrobacillus ferrooxidans (strain ATCC 23270)).